A 293-amino-acid chain; its full sequence is Pyridoxal 5'-phosphate synthase subunit PdxS (293 aa).

D-ribose 5-phosphate is bound at residue D23. K80 serves as the catalytic Schiff-base intermediate with D-ribose 5-phosphate. Residue G152 coordinates D-ribose 5-phosphate. A D-glyceraldehyde 3-phosphate-binding site is contributed by R164. D-ribose 5-phosphate contacts are provided by residues G213 and 234-235; that span reads GS.

Belongs to the PdxS/SNZ family. In terms of assembly, in the presence of PdxT, forms a dodecamer of heterodimers.

The catalysed reaction is aldehydo-D-ribose 5-phosphate + D-glyceraldehyde 3-phosphate + L-glutamine = pyridoxal 5'-phosphate + L-glutamate + phosphate + 3 H2O + H(+). The protein operates within cofactor biosynthesis; pyridoxal 5'-phosphate biosynthesis. In terms of biological role, catalyzes the formation of pyridoxal 5'-phosphate from ribose 5-phosphate (RBP), glyceraldehyde 3-phosphate (G3P) and ammonia. The ammonia is provided by the PdxT subunit. Can also use ribulose 5-phosphate and dihydroxyacetone phosphate as substrates, resulting from enzyme-catalyzed isomerization of RBP and G3P, respectively. The chain is Pyridoxal 5'-phosphate synthase subunit PdxS from Desulfovibrio desulfuricans (strain ATCC 27774 / DSM 6949 / MB).